The following is a 506-amino-acid chain: Lysine--tRNA ligase (506 aa).

The Mg(2+) site is built by Glu-416 and Glu-423.

Belongs to the class-II aminoacyl-tRNA synthetase family. Homodimer. Mg(2+) serves as cofactor.

The protein resides in the cytoplasm. It catalyses the reaction tRNA(Lys) + L-lysine + ATP = L-lysyl-tRNA(Lys) + AMP + diphosphate. The polypeptide is Lysine--tRNA ligase (Bordetella bronchiseptica (strain ATCC BAA-588 / NCTC 13252 / RB50) (Alcaligenes bronchisepticus)).